Reading from the N-terminus, the 246-residue chain is 5-oxoprolinase subunit A (246 aa).

This sequence belongs to the LamB/PxpA family. In terms of assembly, forms a complex composed of PxpA, PxpB and PxpC.

It catalyses the reaction 5-oxo-L-proline + ATP + 2 H2O = L-glutamate + ADP + phosphate + H(+). Its function is as follows. Catalyzes the cleavage of 5-oxoproline to form L-glutamate coupled to the hydrolysis of ATP to ADP and inorganic phosphate. The chain is 5-oxoprolinase subunit A from Cupriavidus pinatubonensis (strain JMP 134 / LMG 1197) (Cupriavidus necator (strain JMP 134)).